We begin with the raw amino-acid sequence, 182 residues long: MSTGLQKGSRLMENRSPPSSFSIEHILGLDKKMDVASSPIIKHHRPWIECSSKVDGTFRQIPLIYDLPVQVDAMRRSAEEETKIRLDRGEEERLTYKREQSWYRGRRPRTAFTRGQIEILENVFRVNSYPGIDVREELASKLALDEDRIQIWFQNRRAKLKRSHRESQFLIVKDSLSSKIEE.

The segment at residues 103-163 is a DNA-binding region (homeobox); the sequence is YRGRRPRTAF…QNRRAKLKRS (61 aa).

This sequence belongs to the ANF homeobox family. Initially expressed in the anterior dorsal region of early embryos and later exclusively in the primordium of the anterior pituitary gland.

The protein localises to the nucleus. Appears to be involved in the regional specification of the anterior head of Xenopus embryos. The chain is Homeobox expressed in ES cells 1-A (hesx1-a) from Xenopus laevis (African clawed frog).